The following is a 543-amino-acid chain: MAELTIDPASIRKALDDFVSSYKPSDTPTQEVGYVATAGDGIAHVTGLPGCMANELLTFEDGTLGLAFNLDAREIGVVILGDFAGIEEGQEVRRTGEVLSVPVGDGYLGRVVDPLGKPIDGLGEIQNIEGRRILEAQAPDVMHRHPVDEPLSTGLKAIDAMTPIGRGQRQLIIGDRQTGKTAIAIDTIINQKANWESGDPKKQVRCIYVAIGQKGSTIASVKQSLEDAGAMEYTTIVASPAADSAGFKYIAPYTGSAIGQHWMYNGKHVLIVFDDLSKQAEAYRSISLLLRRPPGREAYPGDVFYLHSRLLERCAKVSDDLGGGSMTGLPIVETKANDVSAYIPTNVISITDGQIFLQSDLFNANQRPAVDVGISVSRVGGAAQTKALKKVSGTLKISLAQYRSLESFAMFASDLDAASKAQLTRGAHLTELLKQPQFHPYSPEQEVVSVWTGTHGKLDDLDLKDVLPFEQGLLDYIDHNTDILKTIRETEEFTADTEAALDKAVDEFRSTFVSGSGKPLEEKKVESVKAAPVDQEKIVAGEK.

Residue 174 to 181 participates in ATP binding; that stretch reads GDRQTGKT.

The protein belongs to the ATPase alpha/beta chains family. In terms of assembly, F-type ATPases have 2 components, CF(1) - the catalytic core - and CF(0) - the membrane proton channel. CF(1) has five subunits: alpha(3), beta(3), gamma(1), delta(1), epsilon(1). CF(0) has three main subunits: a(1), b(2) and c(9-12). The alpha and beta chains form an alternating ring which encloses part of the gamma chain. CF(1) is attached to CF(0) by a central stalk formed by the gamma and epsilon chains, while a peripheral stalk is formed by the delta and b chains.

It is found in the cell membrane. It carries out the reaction ATP + H2O + 4 H(+)(in) = ADP + phosphate + 5 H(+)(out). Its function is as follows. Produces ATP from ADP in the presence of a proton gradient across the membrane. The alpha chain is a regulatory subunit. The sequence is that of ATP synthase subunit alpha from Bifidobacterium longum subsp. infantis (strain ATCC 15697 / DSM 20088 / JCM 1222 / NCTC 11817 / S12).